A 512-amino-acid polypeptide reads, in one-letter code: Maturase K (512 aa).

The protein belongs to the intron maturase 2 family. MatK subfamily.

Its subcellular location is the plastid. The protein localises to the chloroplast. In terms of biological role, usually encoded in the trnK tRNA gene intron. Probably assists in splicing its own and other chloroplast group II introns. The polypeptide is Maturase K (Lemna gibba (Swollen duckweed)).